A 180-amino-acid chain; its full sequence is UPF0227 protein CKO_01948 (180 aa).

The protein belongs to the UPF0227 family.

The protein is UPF0227 protein CKO_01948 of Citrobacter koseri (strain ATCC BAA-895 / CDC 4225-83 / SGSC4696).